The sequence spans 682 residues: Potassium-transporting ATPase ATP-binding subunit (682 aa).

Transmembrane regions (helical) follow at residues 34 to 54 (PVMFIVWIGSLLTTCISIAMA), 62 to 82 (ALFSAAISGWLWVTVLFANFA), 219 to 239 (IALTILLIALTIVFLLATATL), and 254 to 274 (VLVALLVCLIPTTIGGLLSAI). D307 (4-aspartylphosphate intermediate) is an active-site residue. ATP is bound by residues D344, E348, 377-384 (FTAQSRMS), and K395. Mg(2+) is bound by residues D518 and D522. 3 consecutive transmembrane segments (helical) span residues 588–608 (FAIIPAAFAATYPQLNALNIM), 616–636 (AILSAVIFNALIIVFLIPLAL), and 656–676 (IYGLGGLLVPFIGIKVIDLLL).

The protein belongs to the cation transport ATPase (P-type) (TC 3.A.3) family. Type IA subfamily. As to quaternary structure, the system is composed of three essential subunits: KdpA, KdpB and KdpC.

The protein localises to the cell inner membrane. It carries out the reaction K(+)(out) + ATP + H2O = K(+)(in) + ADP + phosphate + H(+). Its function is as follows. Part of the high-affinity ATP-driven potassium transport (or Kdp) system, which catalyzes the hydrolysis of ATP coupled with the electrogenic transport of potassium into the cytoplasm. This subunit is responsible for energy coupling to the transport system and for the release of the potassium ions to the cytoplasm. The polypeptide is Potassium-transporting ATPase ATP-binding subunit (Escherichia coli O8 (strain IAI1)).